The chain runs to 204 residues: Minor allergen Alt a 7 (204 aa).

The Flavodoxin-like domain maps to 5-195 (IAIVYYSMYG…NIAQAQGKAF (191 aa)).

The protein belongs to the WrbA family.

Its subcellular location is the cytoplasm. The protein is Minor allergen Alt a 7 (ALTA7) of Alternaria alternata (Alternaria rot fungus).